Here is a 399-residue protein sequence, read N- to C-terminus: Transferrin receptor subunit ESAG6 (399 aa).

The N-terminal stretch at 1–17 (MRFWFVLLALLGKEIYA) is a signal peptide. N-linked (GlcNAc...) asparagine glycans are attached at residues Asn-26 and Asn-110. Disulfide bonds link Cys-34/Cys-161, Cys-84/Cys-312, and Cys-144/Cys-215. 3 N-linked (GlcNAc...) asparagine glycosylation sites follow: Asn-235, Asn-250, and Asn-360. Asn-376 is lipidated: GPI-anchor amidated asparagine. Positions 377–399 (AAAIHLSVSTAALCRSALLLGVL) are cleaved as a propeptide — removed in mature form.

Heterodimer composed of ESAG6 and ESAG7. N-glycosylated. Glycosylation is dispensable for heterodimer formation and host transferrin binding.

The protein localises to the cell membrane. The protein resides in the flagellar pocket. Its function is as follows. Transferrin receptor subunit involved in receptor-mediated acquisition of iron from the environment by binding host TF/transferrin. This chain is Transferrin receptor subunit ESAG6, found in Trypanosoma brucei brucei.